A 202-amino-acid chain; its full sequence is Imidazoleglycerol-phosphate dehydratase (202 aa).

This sequence belongs to the imidazoleglycerol-phosphate dehydratase family.

The protein localises to the cytoplasm. The catalysed reaction is D-erythro-1-(imidazol-4-yl)glycerol 3-phosphate = 3-(imidazol-4-yl)-2-oxopropyl phosphate + H2O. It participates in amino-acid biosynthesis; L-histidine biosynthesis; L-histidine from 5-phospho-alpha-D-ribose 1-diphosphate: step 6/9. This Rhizobium etli (strain CIAT 652) protein is Imidazoleglycerol-phosphate dehydratase.